The chain runs to 1186 residues: MSVACVLKRKAVLWQDSFSPHLKHHPQEPANPNMPVVLTSGTGSQAQPQPAANQALAAGTHSSPVPGSIGVAGRSQDDAMVDYFFQRQHGEQLGGGGSGGGGYNNSKHRWPTGDNIHAEHQVRSMDELNHDFQALALEGRAMGEQLLPGKKFWETDESSKDGPKGIFLGDQWRDSAWGTSDHSVSQPIMVQRRPGQSFHVNSEVNSVLSPRSESGGLGVSMVEYVLSSSPGDSCLRKGGFGPRDADSDENDKGEKKNKGTFDGDKLGDLKEEGDVMDKTNGLPVQNGIDADVKDFSRTPGNCQNSANEVDLLGPNQNGSEGLAQLTSTNGAKPVEDFSNMESQSVPLDPMEHVGMEPLQFDYSGTQVPVDSAAATVGLFDYNSQQQLFQRPNALAVQQLTAAQQQQYALAAAHQPHIGLAPAAFVPNPYIISAAPPGTDPYTAGLAAAATLGPAVVPHQYYGVTPWGVYPASLFQQQAAAAAAATNSANQQTTPQAQQGQQQVLRGGASQRPLTPNQNQQGQQTDPLVAAAAVNSALAFGQGLAAGMPGYPVLAPAAYYDQTGALVVNAGARNGLGAPVRLVAPAPVIISSSAAQAAVAAAAASANGAAGGLAGTTNGPFRPLGTQQPQPQPQQQPNNNLASSSFYGNNSLNSNSQSSSLFSQGSAQPANTSLGFGSSSSLGATLGSALGGFGTAVANSNTGSGSRRDSLTGSSDLYKRTSSSLTPIGHSFYNGLSFSSSPGPVGMPLPSQGPGHSQTPPPSLSSHGSSSSLNLGGLTNGGGRYISAAPGAEAKYRSASSASSLFSPSSTLFSSSRLRYGMSDVMPSGRSRLLEDFRNNRYPNLQLREIAGHIMEFSQDQHGSRFIQLKLERATPAERQLVFNEILQAAYQLMVDVFGNYVIQKFFEFGSLEQKLALAERIRGHVLSLALQMYGCRVIQKALEFIPSDQQNEMVRELDGHVLKCVKDQNGNHVVQKCIECVQPQSLQFIIDAFKGQVFALSTHPYGCRVIQRILEHCLPDQTLPILEELHQHTEQLVQDQYGNYVIQHVLEHGRPEDKSKIVAEIRGNVLVLSQHKFASNVVEKCVTHASRTERAVLIDEVCTMNDGPHSALYTMMKDQYANYVVQKMIDVAEPGQRKIVMHKIRPHIATLRKYTYGKHILAKLEKYYMKNGVDLGPICGPPNGII.

Ser2 is modified (N-acetylserine). Position 19 is a phosphoserine (Ser19). The disordered stretch occupies residues 22–73; the sequence is LKHHPQEPANPNMPVVLTSGTGSQAQPQPAANQALAAGTHSSPVPGSIGVAG. Residues 45–58 are compositionally biased toward low complexity; sequence QAQPQPAANQALAA. A phosphoserine mark is found at Ser75, Ser98, and Ser106. Phosphothreonine is present on Thr112. A phosphoserine mark is found at Ser124, Ser159, Ser197, Ser209, and Ser229. The interval 233–272 is disordered; that stretch reads SCLRKGGFGPRDADSDENDKGEKKNKGTFDGDKLGDLKEE. Basic and acidic residues predominate over residues 250–272; the sequence is NDKGEKKNKGTFDGDKLGDLKEE. Ser305 is subject to Phosphoserine. Over residues 485–502 the composition is skewed to low complexity; sequence TNSANQQTTPQAQQGQQQ. 2 disordered regions span residues 485–524 and 613–648; these read TNSANQQTTPQAQQGQQQVLRGGASQRPLTPNQNQQGQQT and AGTTNGPFRPLGTQQPQPQPQQQPNNNLASSSFYGN. The segment covering 511–524 has biased composition (polar residues); it reads RPLTPNQNQQGQQT. Thr514 carries the post-translational modification Phosphothreonine. Residues 626-639 show a composition bias toward low complexity; that stretch reads QQPQPQPQQQPNNN. Phosphoserine is present on residues Ser709 and Ser714. The segment at 742–775 is disordered; that stretch reads GPVGMPLPSQGPGHSQTPPPSLSSHGSSSSLNLG. The span at 763–775 shows a compositional bias: low complexity; sequence LSSHGSSSSLNLG. Arg796 carries the omega-N-methylarginine modification. Ser806 and Ser822 each carry phosphoserine. In terms of domain architecture, PUM-HD spans 828 to 1168; that stretch reads GRSRLLEDFR…HILAKLEKYY (341 aa). 8 Pumilio repeats span residues 848 to 883, 884 to 919, 920 to 955, 956 to 991, 992 to 1027, 1028 to 1063, 1064 to 1099, and 1103 to 1142; these read EIAGHIMEFSQDQHGSRFIQLKLERATPAERQLVFN, EILQAAYQLMVDVFGNYVIQKFFEFGSLEQKLALAE, RIRGHVLSLALQMYGCRVIQKALEFIPSDQQNEMVR, ELDGHVLKCVKDQNGNHVVQKCIECVQPQSLQFIID, AFKGQVFALSTHPYGCRVIQRILEHCLPDQTLPILE, ELHQHTEQLVQDQYGNYVIQHVLEHGRPEDKSKIVA, EIRGNVLVLSQHKFASNVVEKCVTHASRTERAVLID, and TMNDGPHSALYTMMKDQYANYVVQKMIDVAEPGQRKIVMH. An adenine-nucleotide binding in RNA target region spans residues 863 to 867; that stretch reads SRFIQ. Residues 899–903 form a uracil-nucleotide binding in RNA target region; sequence NYVIQ. The segment at 935-939 is adenine-nucleotide binding in RNA target; that stretch reads CRVIQ. Residues 971–975 form a non-specific-nucleotide binding in RNA target region; the sequence is NHVVQ. The tract at residues 1007–1011 is adenine-nucleotide binding in RNA target; sequence CRVIQ. The interval 1043–1047 is uracil-nucleotide binding in RNA target; that stretch reads NYVIQ. 2 guanine-nucleotide binding in RNA target regions span residues 1079 to 1083 and 1080 to 1083; these read SNVVE and NVVE. The tract at residues 1122–1126 is uracil-nucleotide binding in RNA target; that stretch reads NYVVQ.

As to quaternary structure, recruits the CCR4-POP2-NOT deadenylase leading to translational inhibition and mRNA degradation. Interacts with TRIM71 (via NHL repeats) in an RNA-dependent manner. In terms of processing, phosphorylation at Ser-714 promotes RNA-binding activity. Following growth factor stimulation phosphorylated at Ser-714, promoting binding to the 3'-UTR of CDKN1B/p27 mRNA.

The protein localises to the cytoplasm. Its subcellular location is the P-body. It is found in the cytoplasmic granule. Sequence-specific RNA-binding protein that acts as a post-transcriptional repressor by binding the 3'-UTR of mRNA targets. Binds to an RNA consensus sequence, the Pumilio Response Element (PRE), 5'-UGUANAUA-3', that is related to the Nanos Response Element (NRE). Mediates post-transcriptional repression of transcripts via different mechanisms: acts via direct recruitment of the CCR4-POP2-NOT deadenylase leading to translational inhibition and mRNA degradation. Also mediates deadenylation-independent repression by promoting accessibility of miRNAs. Following growth factor stimulation, phosphorylated and binds to the 3'-UTR of CDKN1B/p27 mRNA, inducing a local conformational change that exposes miRNA-binding sites, promoting association of miR-221 and miR-222, efficient suppression of CDKN1B/p27 expression, and rapid entry to the cell cycle. Acts as a post-transcriptional repressor of E2F3 mRNAs by binding to its 3'-UTR and facilitating miRNA regulation. Represses a program of genes necessary to maintain genomic stability such as key mitotic, DNA repair and DNA replication factors. Its ability to repress those target mRNAs is regulated by the lncRNA NORAD (non-coding RNA activated by DNA damage) which, due to its high abundance and multitude of PUMILIO binding sites, is able to sequester a significant fraction of PUM1 and PUM2 in the cytoplasm. Involved in neuronal functions by regulating ATXN1 mRNA levels: acts by binding to the 3'-UTR of ATXN1 transcripts, leading to their down-regulation independently of the miRNA machinery. Plays a role in cytoplasmic sensing of viral infection. In testis, acts as a post-transcriptional regulator of spermatogenesis by binding to the 3'-UTR of mRNAs coding for regulators of p53/TP53. Involved in embryonic stem cell renewal by facilitating the exit from the ground state: acts by targeting mRNAs coding for naive pluripotency transcription factors and accelerates their down-regulation at the onset of differentiation. Binds specifically to miRNA MIR199A precursor, with PUM2, regulates miRNA MIR199A expression at a postranscriptional level. The protein is Pumilio homolog 1 (PUM1) of Pongo abelii (Sumatran orangutan).